Reading from the N-terminus, the 151-residue chain is 3-hydroxyacyl-[acyl-carrier-protein] dehydratase FabZ (151 aa).

H49 is a catalytic residue.

Belongs to the thioester dehydratase family. FabZ subfamily.

The protein localises to the cytoplasm. The enzyme catalyses a (3R)-hydroxyacyl-[ACP] = a (2E)-enoyl-[ACP] + H2O. Involved in unsaturated fatty acids biosynthesis. Catalyzes the dehydration of short chain beta-hydroxyacyl-ACPs and long chain saturated and unsaturated beta-hydroxyacyl-ACPs. This is 3-hydroxyacyl-[acyl-carrier-protein] dehydratase FabZ from Wolinella succinogenes (strain ATCC 29543 / DSM 1740 / CCUG 13145 / JCM 31913 / LMG 7466 / NCTC 11488 / FDC 602W) (Vibrio succinogenes).